We begin with the raw amino-acid sequence, 226 residues long: Cytochrome c oxidase subunit 2 (226 aa).

The Mitochondrial intermembrane portion of the chain corresponds to 1–14 (MAYPLQLGLQDATS). The chain crosses the membrane as a helical span at residues 15-45 (PIMEELTSFHDHTLMIVFLISTLVLYIISLM). The Mitochondrial matrix portion of the chain corresponds to 46–59 (LTTKLTHTSTMDAQ). A helical membrane pass occupies residues 60–87 (EIETIWTILPAIILIMIALPSLRVLYMM). Over 88–226 (DEINNPALTV…KYFEAWSASM (139 aa)) the chain is Mitochondrial intermembrane. Cu cation contacts are provided by histidine 161, cysteine 196, glutamate 198, cysteine 200, histidine 204, and methionine 207. Mg(2+) is bound at residue glutamate 198. A Phosphotyrosine modification is found at tyrosine 218.

The protein belongs to the cytochrome c oxidase subunit 2 family. Component of the cytochrome c oxidase (complex IV, CIV), a multisubunit enzyme composed of 14 subunits. The complex is composed of a catalytic core of 3 subunits MT-CO1, MT-CO2 and MT-CO3, encoded in the mitochondrial DNA, and 11 supernumerary subunits COX4I, COX5A, COX5B, COX6A, COX6B, COX6C, COX7A, COX7B, COX7C, COX8 and NDUFA4, which are encoded in the nuclear genome. The complex exists as a monomer or a dimer and forms supercomplexes (SCs) in the inner mitochondrial membrane with NADH-ubiquinone oxidoreductase (complex I, CI) and ubiquinol-cytochrome c oxidoreductase (cytochrome b-c1 complex, complex III, CIII), resulting in different assemblies (supercomplex SCI(1)III(2)IV(1) and megacomplex MCI(2)III(2)IV(2)). Found in a complex with TMEM177, COA6, COX18, COX20, SCO1 and SCO2. Interacts with TMEM177 in a COX20-dependent manner. Interacts with COX20. Interacts with COX16. Cu cation is required as a cofactor.

The protein localises to the mitochondrion inner membrane. The enzyme catalyses 4 Fe(II)-[cytochrome c] + O2 + 8 H(+)(in) = 4 Fe(III)-[cytochrome c] + 2 H2O + 4 H(+)(out). Its function is as follows. Component of the cytochrome c oxidase, the last enzyme in the mitochondrial electron transport chain which drives oxidative phosphorylation. The respiratory chain contains 3 multisubunit complexes succinate dehydrogenase (complex II, CII), ubiquinol-cytochrome c oxidoreductase (cytochrome b-c1 complex, complex III, CIII) and cytochrome c oxidase (complex IV, CIV), that cooperate to transfer electrons derived from NADH and succinate to molecular oxygen, creating an electrochemical gradient over the inner membrane that drives transmembrane transport and the ATP synthase. Cytochrome c oxidase is the component of the respiratory chain that catalyzes the reduction of oxygen to water. Electrons originating from reduced cytochrome c in the intermembrane space (IMS) are transferred via the dinuclear copper A center (CU(A)) of subunit 2 and heme A of subunit 1 to the active site in subunit 1, a binuclear center (BNC) formed by heme A3 and copper B (CU(B)). The BNC reduces molecular oxygen to 2 water molecules using 4 electrons from cytochrome c in the IMS and 4 protons from the mitochondrial matrix. The chain is Cytochrome c oxidase subunit 2 (MT-CO2) from Perognathus flavus (Silky pocket mouse).